The following is a 142-amino-acid chain: Large ribosomal subunit protein uL13 (142 aa).

This sequence belongs to the universal ribosomal protein uL13 family. As to quaternary structure, part of the 50S ribosomal subunit.

This protein is one of the early assembly proteins of the 50S ribosomal subunit, although it is not seen to bind rRNA by itself. It is important during the early stages of 50S assembly. This chain is Large ribosomal subunit protein uL13, found in Buchnera aphidicola subsp. Schizaphis graminum (strain Sg).